The primary structure comprises 484 residues: Calcium uniporter protein, mitochondrial (484 aa).

The transit peptide at 1-33 (MGHVLGGTLLAANRLARPPAVVLGKPRVCCWRA) directs the protein to the mitochondrion. Residues 34 to 304 (SPWPVIVSSA…CDLLAHKGAH (271 aa)) lie on the Mitochondrial matrix side of the membrane. Disordered regions lie at residues 59–104 (ARYE…KGRL) and 188–227 (YTGG…DTHW). A compositionally biased stretch (basic and acidic residues) spans 61-82 (YEARGRSTTQRKVDDRPWHRES). Polar residues predominate over residues 83–93 (SGSLPKSTSPD). Residues 305–326 (ALAKGGFAALAAWWGIVYYVTF) traverse the membrane as a helical segment. Topologically, residues 327–334 (HTDMGWDL) are mitochondrial intermembrane. The Selectivity filter signature appears at 332-340 (WDLVEPITY). Residues 335 to 355 (VEPITYLAGLASIMGGYLWFL) traverse the membrane as a helical segment. E336 lines the Ca(2+) pocket. At 356 to 484 (FISRDLSYKA…NEAAANVPGD (129 aa)) the chain is on the mitochondrial matrix side. Composition is skewed to basic and acidic residues over residues 426–435 (KEVLEEEKGG) and 452–462 (DHDHDHDHVSH). The segment at 426–484 (KEVLEEEKGGKARKREQEDEDGDGDDDHDHDHDHVSHGAELQGQDILHANEAAANVPGD) is disordered.

It belongs to the MCU (TC 1.A.77) family. In terms of assembly, homotetramer, assembles in a dimer or dimers configuration with two interfaces.

Its subcellular location is the mitochondrion inner membrane. It carries out the reaction Ca(2+)(in) = Ca(2+)(out). With respect to regulation, inhibited by ruthenium red or its derivative Ru360. Highly selective calcium channel localized to the inner mitochondrial membrane, which mediates calcium uptake into the mitochondrial matrix. Mitochondrial calcium homeostasis plays key roles in cellular physiology and regulates ATP production, cytoplasmic calcium signals and activation of cell death pathways. Sufficient to operate as a pore-forming channel without the need of calcium-sensor or auxiliary subunit. The protein is Calcium uniporter protein, mitochondrial of Metarhizium acridum (strain CQMa 102).